A 141-amino-acid chain; its full sequence is Hemoglobin subunit alpha (141 aa).

The region spanning 1–141 is the Globin domain; sequence VLSPADKKNV…VSTVLTSKYR (141 aa). Position 3 is a phosphoserine (serine 3). N6-succinyllysine is present on residues lysine 7 and lysine 11. The residue at position 16 (lysine 16) is an N6-acetyllysine; alternate. Position 16 is an N6-succinyllysine; alternate (lysine 16). Tyrosine 24 carries the phosphotyrosine modification. Serine 35 is modified (phosphoserine). Lysine 40 is modified (N6-succinyllysine). Serine 49 is modified (phosphoserine). O2 is bound at residue histidine 58. Histidine 87 is a binding site for heme b. Phosphoserine is present on serine 102. Threonine 108 is subject to Phosphothreonine. A phosphoserine mark is found at serine 124 and serine 131. Phosphothreonine occurs at positions 134 and 137. Serine 138 is modified (phosphoserine).

It belongs to the globin family. In terms of assembly, heterotetramer of two alpha chains and two beta chains. Red blood cells.

Functionally, involved in oxygen transport from the lung to the various peripheral tissues. In terms of biological role, hemopressin acts as an antagonist peptide of the cannabinoid receptor CNR1. Hemopressin-binding efficiently blocks cannabinoid receptor CNR1 and subsequent signaling. This Spermophilus citellus (European ground squirrel) protein is Hemoglobin subunit alpha (HBA).